A 361-amino-acid polypeptide reads, in one-letter code: Chorismate synthase (361 aa).

The NADP(+) site is built by Arg48 and Arg54. FMN contacts are provided by residues 125–127 (RSS), 238–239 (NA), Gly278, 293–297 (KPTSS), and Arg319.

This sequence belongs to the chorismate synthase family. Homotetramer. It depends on FMNH2 as a cofactor.

It catalyses the reaction 5-O-(1-carboxyvinyl)-3-phosphoshikimate = chorismate + phosphate. Its pathway is metabolic intermediate biosynthesis; chorismate biosynthesis; chorismate from D-erythrose 4-phosphate and phosphoenolpyruvate: step 7/7. In terms of biological role, catalyzes the anti-1,4-elimination of the C-3 phosphate and the C-6 proR hydrogen from 5-enolpyruvylshikimate-3-phosphate (EPSP) to yield chorismate, which is the branch point compound that serves as the starting substrate for the three terminal pathways of aromatic amino acid biosynthesis. This reaction introduces a second double bond into the aromatic ring system. This Salmonella choleraesuis (strain SC-B67) protein is Chorismate synthase.